We begin with the raw amino-acid sequence, 435 residues long: Cyclic 2,3-diphosphoglycerate synthetase (435 aa).

The protein belongs to the cyclic 2,3-diphosphoglycerate synthetase family.

It is found in the cytoplasm. The enzyme catalyses (2R)-2,3-bisphosphoglycerate + ATP + H(+) = cyclic (2R)-2,3-bisphosphoglycerate + ADP + phosphate. Catalyzes the formation of cyclic 2,3-diphosphoglycerate (cDPG) by formation of an intramolecular phosphoanhydride bond at the expense of ATP. The polypeptide is Cyclic 2,3-diphosphoglycerate synthetase (Pyrococcus horikoshii (strain ATCC 700860 / DSM 12428 / JCM 9974 / NBRC 100139 / OT-3)).